The following is a 508-amino-acid chain: Nucleolar complex protein 4 homolog (508 aa).

Transmembrane regions (helical) follow at residues 288-308 (VAYG…FILI), 341-361 (HLAD…AAFI), and 367-387 (LALT…CNLF).

This sequence belongs to the CBF/MAK21 family.

It is found in the nucleus membrane. The protein localises to the nucleus. It localises to the nucleolus. This chain is Nucleolar complex protein 4 homolog (NOC4L), found in Gallus gallus (Chicken).